Here is a 160-residue protein sequence, read N- to C-terminus: Twist-related protein 2 (160 aa).

The tract at residues 1-63 (MEEGSSSPVS…GSPSAQSFEE (63 aa)) is disordered. Basic residues predominate over residues 27–37 (KRFGRKRRYSK). The region spanning 66–117 (SQRILANVRERQRTQSLNEAFAALRKIIPTLPSDKLSKIQTLKLAARYIDFL) is the bHLH domain.

In terms of assembly, efficient DNA binding requires dimerization with another bHLH protein. Forms a heterodimer with TCF3/E12. Also interacts with MEF2C. In terms of tissue distribution, in the embryo, highly expressed in chondrogenic cells. In embryonic skin, expressed in the undifferentiated mesenchymal layer beneath the epidermis which later develops into the dermis. Expressed in early myeloid cells but not in lymphoid cells in the liver. Expression also detected in the secretory ependymal epithelium of the choroid plexus primordium. In the adult, expressed in secreting glandular tissues and tubules.

Its subcellular location is the nucleus. The protein localises to the cytoplasm. Binds to the E-box consensus sequence 5'-CANNTG-3' as a heterodimer and inhibits transcriptional activation by MYOD1, MYOG, MEF2A and MEF2C. Also represses expression of pro-inflammatory cytokines such as TNFA and IL1B. Involved in postnatal glycogen storage and energy metabolism. Inhibits the premature or ectopic differentiation of preosteoblast cells during osteogenesis, possibly by changing the internal signal transduction response of osteoblasts to external growth factors. This chain is Twist-related protein 2 (TWIST2), found in Homo sapiens (Human).